The chain runs to 150 residues: Large ribosomal subunit protein bL9 (150 aa).

The protein belongs to the bacterial ribosomal protein bL9 family.

Binds to the 23S rRNA. The sequence is that of Large ribosomal subunit protein bL9 from Albidiferax ferrireducens (strain ATCC BAA-621 / DSM 15236 / T118) (Rhodoferax ferrireducens).